The following is a 384-amino-acid chain: 4-coumarate--CoA ligase (384 aa).

This sequence belongs to the ATP-dependent AMP-binding enzyme family.

It carries out the reaction (E)-4-coumarate + ATP + CoA = (E)-4-coumaroyl-CoA + AMP + diphosphate. In terms of biological role, converts p-coumaric acid into p-coumaryl CoA. This is necessary for the activation of the photoactive yellow protein (PYP) chromophore. The protein is 4-coumarate--CoA ligase (pcl) of Rhodobacter capsulatus (strain ATCC BAA-309 / NBRC 16581 / SB1003).